Consider the following 115-residue polypeptide: uncharacterized protein (115 aa).

3 helical membrane passes run 7–27 (TLIF…IWFD), 40–60 (YALT…LLAA), and 72–92 (IVLV…YFYL).

Its subcellular location is the cell membrane. This is an uncharacterized protein from Haemophilus influenzae (strain ATCC 51907 / DSM 11121 / KW20 / Rd).